We begin with the raw amino-acid sequence, 379 residues long: Tryptophan 2,3-dioxygenase (379 aa).

Substrate contacts are provided by residues 57-61 and Arg128; that span reads FIITH. His312 contacts heme. Substrate is bound at residue Thr327.

Belongs to the tryptophan 2,3-dioxygenase family. Homotetramer. Dimer of dimers. The cofactor is heme.

The enzyme catalyses L-tryptophan + O2 = N-formyl-L-kynurenine. Its pathway is amino-acid degradation; L-tryptophan degradation via kynurenine pathway; L-kynurenine from L-tryptophan: step 1/2. It participates in pigment biosynthesis; ommochrome biosynthesis. In terms of biological role, heme-dependent dioxygenase that catalyzes the oxidative cleavage of the L-tryptophan (L-Trp) pyrrole ring and converts L-tryptophan to N-formyl-L-kynurenine. Catalyzes the oxidative cleavage of the indole moiety. The polypeptide is Tryptophan 2,3-dioxygenase (Drosophila yakuba (Fruit fly)).